The chain runs to 728 residues: Plakophilin-1 (728 aa).

The tract at residues 1–235 (MNHSPLKTAL…SFGHSRASSK (235 aa)) is required for binding to single stranded DNA. The required for interaction with EIF4A1 stretch occupies residues 1 to 287 (MNHSPLKTAL…ESAKQQVYQL (287 aa)). Phosphoserine; by RIPK4 is present on serine 4. Positions 48–69 (TVKRQKSKSSQSSTLSHSNRGS) are disordered. Phosphorylation in this region is required for cytoplasmic localization and protein stabilization stretches follow at residues 54–69 (SKSSQSSTLSHSNRGS) and 117–192 (RFSS…STCS). Residue serine 119 is modified to Phosphoserine. Phosphoserine; by RIPK4 is present on serine 120. Position 122 is a phosphoserine (serine 122). Phosphoserine; by RIPK4 is present on serine 143. The required for WNT-mediated nuclear localization stretch occupies residues 161–270 (YCDPRGTLRK…KYQAIGAYYI (110 aa)). 9 ARM repeats span residues 244 to 275 (SGLTIPKAVQYLCSQDEKYQAIGAYYIQHTCF), 276 to 317 (QDES…NLVF), 318 to 360 (RSTP…NLSS), 361 to 412 (TDEL…GCLR), 413 to 443 (NLSSADAGRQTMRNYSGLIDSLMAYVQNCVA), 505 to 536 (NYDCPLPEEETNPKGSSWLYHSDAIRTYLNLM), 537 to 583 (GKSK…IARL), 584 to 629 (LQSG…SHTG), and 630 to 694 (NTSN…DMWA).

This sequence belongs to the beta-catenin family. In terms of assembly, part of a complex that contains DSG3, PKP1, YAP1 and YWHAG; the complex is required for localization of DSG3 and YAP1 to the cell membrane in keratinocytes. Interacts (via N-terminus) with KRT5/CK5, KRT8/CK8 (via rod domain), KRT15/CK15 and KRT18/CK18 (via rod domain) as part of intermediate filaments. Interacts with VIM (via rod domain). Interacts with DSP. Interacts with DES. Interacts with FXR1; the interaction may facilitate the binding of PKP1 to PKP2, PKP3 and DSP mRNA. Interacts (via N-terminus) with EIF4A1; the interaction promotes EIF4A1 recruitment to the cap-dependent translation complex and EIF4A1 ATPase activity. Interacts with TJP1/ZO-1; the interaction facilitates TJP1/ZO-1 localization to the plasma membrane. Interacts (when phosphorylated) with YWHAG; the interaction results in translocation of PKP1 to the cytoplasm and loss of intercellular adhesion in keratinocytes. Phosphorylated by AKT2; required for interaction with YWHAG and subsequent localization away from desmosomes to the cytoplasm. Phosphorylation of Ser-119 by AKT2 promotes PKP1-driven cap-dependent mRNA translation and decreases intercellular adhesion, phosphorylation is promoted by insulin. Phosphorylation by RIPK4 at the N-terminus is required for its role in differentiation of keratinocytes and DSG1 localization at cell junctions. In terms of tissue distribution, expressed in undifferentiated keratinocytes of the epidermis at birth, expression increases as differentiation proceeds (at protein level). Expressed in the cervical loop during early tooth differentiation, expression is then present between ameloblasts, at ameloblast-ameloblast junctions and in the stratum intermedium during pre-secretory and secretory stages of tooth development (at protein level).

It localises to the nucleus. The protein localises to the cytoplasm. It is found in the perinuclear region. Its subcellular location is the cell junction. The protein resides in the desmosome. It localises to the cell membrane. The protein localises to the stress granule. Its function is as follows. A component of desmosome cell-cell junctions which are required for positive regulation of cellular adhesion. Plays a role in desmosome protein expression regulation and localization to the desmosomal plaque, thereby maintaining cell sheet integrity and anchorage of desmosomes to intermediate filaments. Required for localization of DSG3 and YAP1 to the cell membrane in keratinocytes in response to mechanical strain, via the formation of an interaction complex composed of DSG3, YAP1, PKP1 and YWHAG. Positively regulates differentiation of keratinocytes, potentially via promoting localization of DSG1 at desmosome cell junctions. Required for calcium-independent development and maturation of desmosome plaques specifically at lateral cell-cell contacts in differentiating keratinocytes. Plays a role in the maintenance of DSG3 protein abundance, DSG3 clustering and localization of these clusters to the cell membrane in keratinocytes. May also promote keratinocyte proliferation and morphogenesis during postnatal development. Required for tight junction inside-out transepidermal barrier function of the skin, and is thereby involved in neonatal survival possibly via maintenance of hydration levels. Promotes Wnt-mediated proliferation and differentiation of ameloblasts, via facilitating TJP1/ZO-1 localization to tight junctions. Binds single-stranded DNA (ssDNA), and may thereby play a role in sensing DNA damage and promoting cell survival. Positively regulates cap-dependent translation and as a result cell proliferation, via recruitment of EIF4A1 to the initiation complex and promotion of EIF4A1 ATPase activity. Regulates the mRNA stability and protein abundance of desmosome components PKP2, PKP3, DSC2 and DSP, potentially via its interaction with FXR1. In Mus musculus (Mouse), this protein is Plakophilin-1 (Pkp1).